A 288-amino-acid chain; its full sequence is Urease accessory protein UreD (288 aa).

Belongs to the UreD family. As to quaternary structure, ureD, UreF and UreG form a complex that acts as a GTP-hydrolysis-dependent molecular chaperone, activating the urease apoprotein by helping to assemble the nickel containing metallocenter of UreC. The UreE protein probably delivers the nickel.

Its subcellular location is the cytoplasm. Functionally, required for maturation of urease via the functional incorporation of the urease nickel metallocenter. The polypeptide is Urease accessory protein UreD (Dechloromonas aromatica (strain RCB)).